A 316-amino-acid chain; its full sequence is N-acetyl-gamma-glutamyl-phosphate reductase (316 aa).

The active site involves cysteine 136.

Belongs to the NAGSA dehydrogenase family. Type 1 subfamily.

The protein resides in the cytoplasm. The catalysed reaction is N-acetyl-L-glutamate 5-semialdehyde + phosphate + NADP(+) = N-acetyl-L-glutamyl 5-phosphate + NADPH + H(+). It functions in the pathway amino-acid biosynthesis; L-arginine biosynthesis; N(2)-acetyl-L-ornithine from L-glutamate: step 3/4. Catalyzes the NADPH-dependent reduction of N-acetyl-5-glutamyl phosphate to yield N-acetyl-L-glutamate 5-semialdehyde. In Xanthomonas oryzae pv. oryzae (strain MAFF 311018), this protein is N-acetyl-gamma-glutamyl-phosphate reductase.